A 150-amino-acid polypeptide reads, in one-letter code: Truncated transcription factor CAULIFLOWER A (150 aa).

One can recognise an MADS-box domain in the interval 1–61 (MGRGRVEMKR…GKLFEYSSES (61 aa)). Residues 90–150 (QTNWSMEYSR…IRSRKNQLMH (61 aa)) enclose the K-box; partial domain.

Homodimer capable of binding to CArG-box sequences. Expressed in some of the meristems of arrest-stage cauliflower heads.

The protein localises to the nucleus. Functionally, probable transcription factor that promotes early floral meristem identity in synergy with APETALA1, FRUITFULL and LEAFY. Is required subsequently for the transition of an inflorescence meristem into a floral meristem. Seems to be partially redundant to the function of APETALA1. This chain is Truncated transcription factor CAULIFLOWER A (CAL-A), found in Brassica oleracea var. botrytis (Cauliflower).